Reading from the N-terminus, the 187-residue chain is MATTNDLKNGMTLDLDGELWNVVEFQHVKPGKGPAFVRTKLKHVLTGKVVDKTFNAGVKVDVATVDKRTMQYLYREGDSFVFMDTETYDQYHIPAQTVGDAANFLLENAEAVVALHEGTPLYVELPAAVELTITYTEPGVQGDRSTGGTKPATLETGAQIQVPLFITTGEKVKVDTRTGEYLGRANS.

The protein belongs to the elongation factor P family.

The protein localises to the cytoplasm. Its pathway is protein biosynthesis; polypeptide chain elongation. Involved in peptide bond synthesis. Stimulates efficient translation and peptide-bond synthesis on native or reconstituted 70S ribosomes in vitro. Probably functions indirectly by altering the affinity of the ribosome for aminoacyl-tRNA, thus increasing their reactivity as acceptors for peptidyl transferase. In Acidothermus cellulolyticus (strain ATCC 43068 / DSM 8971 / 11B), this protein is Elongation factor P.